A 257-amino-acid chain; its full sequence is Protein IMPACT homolog (257 aa).

The region spanning 9 to 102 is the RWD domain; that stretch reads AEIESLASIF…SLVQDFIRDL (94 aa).

It belongs to the IMPACT family. Interacts with gcn-1; prevents the interaction of gcn-1 with gcn-2 and inhibits gcn-2 kinase activity. Interaction with rpl-39; this interaction occurs in a gcn-1-independent manner. Associates with ribosomes; this interaction occurs in a gcn-1-independent manner. Associates with actin; this interaction occurs in a gcn-1-independent manner.

The protein resides in the cytoplasm. Its function is as follows. Translational regulator that ensures constant high levels of translation under amino acid starvation. Plays a role as a negative regulator of the gcn-2 kinase activity; impairs gcn-1-mediated gcn-2 activation, and hence gcn-2-mediated eIF-2-alpha phosphorylation and subsequent down-regulation of protein synthesis in amino acid-starved cells. Plays a role in differentiation of neuronal cells by stimulating neurite outgrowth. The protein is Protein IMPACT homolog of Caenorhabditis elegans.